The primary structure comprises 337 residues: DNA-directed RNA polymerase subunit alpha (337 aa).

Residues 1–233 form an alpha N-terminal domain (alpha-NTD) region; that stretch reads MVREKVTVST…DLFIPFLHME (233 aa). Residues 265 to 337 form an alpha C-terminal domain (alpha-CTD) region; sequence KKIALKSIFI…FVIDLAKNKF (73 aa).

This sequence belongs to the RNA polymerase alpha chain family. As to quaternary structure, in plastids the minimal PEP RNA polymerase catalytic core is composed of four subunits: alpha, beta, beta', and beta''. When a (nuclear-encoded) sigma factor is associated with the core the holoenzyme is formed, which can initiate transcription.

It localises to the plastid. The protein resides in the chloroplast. It catalyses the reaction RNA(n) + a ribonucleoside 5'-triphosphate = RNA(n+1) + diphosphate. In terms of biological role, DNA-dependent RNA polymerase catalyzes the transcription of DNA into RNA using the four ribonucleoside triphosphates as substrates. In Solanum lycopersicum (Tomato), this protein is DNA-directed RNA polymerase subunit alpha.